Here is a 515-residue protein sequence, read N- to C-terminus: Bifunctional purine biosynthesis protein PurH (515 aa).

The MGS-like domain occupies Met-1–Val-145.

It belongs to the PurH family.

It carries out the reaction (6R)-10-formyltetrahydrofolate + 5-amino-1-(5-phospho-beta-D-ribosyl)imidazole-4-carboxamide = 5-formamido-1-(5-phospho-D-ribosyl)imidazole-4-carboxamide + (6S)-5,6,7,8-tetrahydrofolate. The catalysed reaction is IMP + H2O = 5-formamido-1-(5-phospho-D-ribosyl)imidazole-4-carboxamide. It functions in the pathway purine metabolism; IMP biosynthesis via de novo pathway; 5-formamido-1-(5-phospho-D-ribosyl)imidazole-4-carboxamide from 5-amino-1-(5-phospho-D-ribosyl)imidazole-4-carboxamide (10-formyl THF route): step 1/1. It participates in purine metabolism; IMP biosynthesis via de novo pathway; IMP from 5-formamido-1-(5-phospho-D-ribosyl)imidazole-4-carboxamide: step 1/1. This Streptococcus pyogenes serotype M12 (strain MGAS2096) protein is Bifunctional purine biosynthesis protein PurH.